A 244-amino-acid polypeptide reads, in one-letter code: Mannose-binding protein C (244 aa).

Positions 1-18 (MSLFTSFLLLCVLTAVYA) are cleaved as a signal peptide. The region spanning 38-96 (GLNGFPGKDGHDGAKGEKGEPGQGLRGLQGPPGKVGPAGPPGNPGSKGATGPKGDRGES) is the Collagen-like domain. 4-hydroxyproline is present on proline 43. The interval 43–99 (PGKDGHDGAKGEKGEPGQGLRGLQGPPGKVGPAGPPGNPGSKGATGPKGDRGESVEF) is disordered. The segment covering 45 to 57 (KDGHDGAKGEKGE) has biased composition (basic and acidic residues). Residues proline 58, proline 69, proline 78, and proline 81 each carry the 4-hydroxyproline modification. A compositionally biased stretch (low complexity) spans 65 to 74 (LQGPPGKVGP). Residues 108–126 (IAALRSELRAMRKWVLLSM) are a coiled coil. Residues 129-241 (NVGKKYFMSS…CSDSFLVVCE (113 aa)) enclose the C-type lectin domain. Disulfide bonds link cysteine 151-cysteine 240 and cysteine 218-cysteine 232.

In terms of assembly, oligomeric complex of 3 or more homotrimers. Interacts with MASP1 and MASP2. Interacts with MEP1A and MEP1B and may inhibit their catalytic activity.

The protein resides in the secreted. Functionally, calcium-dependent lectin involved in innate immune defense. Binds mannose, fucose and N-acetylglucosamine on different microorganisms and activates the lectin complement pathway. Binds to late apoptotic cells, as well as to apoptotic blebs and to necrotic cells, but not to early apoptotic cells, facilitating their uptake by macrophages. This is Mannose-binding protein C (Mbl2) from Rattus norvegicus (Rat).